A 420-amino-acid chain; its full sequence is Gamma-glutamyl phosphate reductase (420 aa).

This sequence belongs to the gamma-glutamyl phosphate reductase family.

It localises to the cytoplasm. The enzyme catalyses L-glutamate 5-semialdehyde + phosphate + NADP(+) = L-glutamyl 5-phosphate + NADPH + H(+). Its pathway is amino-acid biosynthesis; L-proline biosynthesis; L-glutamate 5-semialdehyde from L-glutamate: step 2/2. Its function is as follows. Catalyzes the NADPH-dependent reduction of L-glutamate 5-phosphate into L-glutamate 5-semialdehyde and phosphate. The product spontaneously undergoes cyclization to form 1-pyrroline-5-carboxylate. In Shewanella denitrificans (strain OS217 / ATCC BAA-1090 / DSM 15013), this protein is Gamma-glutamyl phosphate reductase.